The following is a 443-amino-acid chain: Thymidine phosphorylase (443 aa).

It belongs to the thymidine/pyrimidine-nucleoside phosphorylase family. As to quaternary structure, homodimer.

It catalyses the reaction thymidine + phosphate = 2-deoxy-alpha-D-ribose 1-phosphate + thymine. Its pathway is pyrimidine metabolism; dTMP biosynthesis via salvage pathway; dTMP from thymine: step 1/2. Its function is as follows. The enzymes which catalyze the reversible phosphorolysis of pyrimidine nucleosides are involved in the degradation of these compounds and in their utilization as carbon and energy sources, or in the rescue of pyrimidine bases for nucleotide synthesis. This is Thymidine phosphorylase from Aliivibrio salmonicida (strain LFI1238) (Vibrio salmonicida (strain LFI1238)).